The following is a 627-amino-acid chain: Ski protein homolog (627 aa).

Polar residues predominate over residues 1-12 (MSDSPIGSSQQV). Disordered stretches follow at residues 1 to 22 (MSDS…PDLM), 34 to 58 (LHEE…KDSR), and 299 to 318 (EYDE…METP).

This sequence belongs to the SKI family. As to quaternary structure, may interact with daf-3. Expressed in ganglia in the head and tail and in the anterior pharynx.

It localises to the nucleus. Its function is as follows. Probable component of transcriptional regulatory complex with SMAD protein daf-3. Required to regulate entry into a developmentally arrested larval state known as dauer, in response to harsh environmental conditions. Involved in larvae undergoing cell-cycle arrest during the dauer stage. The protein is Ski protein homolog of Caenorhabditis elegans.